The following is a 414-amino-acid chain: MAALFVSLLALTSLVPVQGAATVPQTDYAKRAERVLKSAPLIDGHNDLLYAIRRSTNDQIYDGKLPFETSLKGHTDLPRMRKGRMGGQFWSVFIACPSDPNAPINTPKFATRDTLEQIDVARRLVDKYSKDLMYCDNPGCAKRAFREGKIGSFIGIEGGHQVGSSIAALRQAFYAGARYMTLTHNCDNAWATAASTVRAGKPDLGMTDFGPALIKEMNRLGMLVDLSHVSHQTMRDVLKITKAPVIFSHSSAYEVSKHLRNVPDDVLKTVAKNNGVVMVTFVSSFVKVDDPDSADVNTVVKHIFHIAEVAGWDHVGLGGDYDGTTELPKGLEDVSKYPYLIEKVLEAGATEEQARKLVGENVLRVWTEVEQIAKKIQRSGVLPVEEVWKGRNGTALSERSTFIEGPAPLEYGCD.

The signal sequence occupies residues 1–20 (MAALFVSLLALTSLVPVQGA). 3 residues coordinate Zn(2+): histidine 45, aspartate 47, and glutamate 157. A disulfide bridge links cysteine 96 with cysteine 186. Residue histidine 184 coordinates substrate. 2 residues coordinate Zn(2+): histidine 228 and histidine 249. Substrate is bound by residues arginine 260 and aspartate 320. An N-linked (GlcNAc...) asparagine glycan is attached at asparagine 392.

It belongs to the metallo-dependent hydrolases superfamily. Peptidase M19 family. The cofactor is Zn(2+).

The catalysed reaction is an L-aminoacyl-L-amino acid + H2O = 2 an L-alpha-amino acid. Functionally, hydrolyzes a wide range of dipeptides. This is Putative dipeptidase TRV_05564 from Trichophyton verrucosum (strain HKI 0517).